The chain runs to 1429 residues: Inactive rhomboid protein 1 (1429 aa).

Disordered regions lie at residues 1–36, 560–579, and 740–766; these read MSSNGSDLGHNNRRNEKGNPDSVHSSMRGSMSSTRR, GNEDAGQSNGTNGNYAPDRP, and TSALNSGGNATSDINLTGDQSSHQPGA. Over 1 to 843 the chain is Cytoplasmic; sequence MSSNGSDLGH…RPFFTYWINT (843 aa). Positions 22 to 33 are enriched in low complexity; it reads SVHSSMRGSMSS. 2 stretches are compositionally biased toward polar residues: residues 564-573 and 740-763; these read AGQSNGTNGN and TSALNSGGNATSDINLTGDQSSHQ. Residues 844–864 form a helical membrane-spanning segment; sequence VQVVVLILSIICYGIAPIGIG. The Lumenal portion of the chain corresponds to 865 to 1099; sequence SEQKTGQVLV…PDQLYRLLTS (235 aa). A helical transmembrane segment spans residues 1100 to 1120; it reads LCMHAGILHLAITLIFQHLFL. Residues 1121-1131 are Cytoplasmic-facing; sequence ADLERLIGTVR. A helical membrane pass occupies residues 1132-1152; the sequence is TAIVYIMSGFAGNLTSAILVP. Residues 1153–1156 lie on the Lumenal side of the membrane; the sequence is HRPE. Residues 1157-1177 traverse the membrane as a helical segment; that stretch reads VGPSASLSGVVASLIALLVWM. Over 1178-1186 the chain is Cytoplasmic; sequence HWKYLHKPH. Residues 1187 to 1207 form a helical membrane-spanning segment; it reads IALFKLLLLCSVLVGIGTLPY. Topologically, residues 1208–1210 are lumenal; the sequence is QLN. A helical transmembrane segment spans residues 1211-1231; that stretch reads FLGLLAGVICGCLLTMSLVPF. Over 1232–1245 the chain is Cytoplasmic; it reads TTFSKYGRKKKINL. The chain crosses the membrane as a helical span at residues 1246–1266; that stretch reads IWTCVLFHVVVYTAMIVTFYI. The Lumenal portion of the chain corresponds to 1267 to 1429; it reads HPSEFHSISF…INNNTEFNVL (163 aa).

It belongs to the peptidase S54 family. In terms of tissue distribution, specifically expressed in the nervous system and in brain.

The protein resides in the endoplasmic reticulum membrane. Functionally, rhomboid protease-like protein which has no protease activity but regulates the secretion of several ligands of the epidermal growth factor receptor. Indirectly activates the epidermal growth factor receptor signaling pathway and may thereby regulate sleep, cell survival, proliferation and migration. This chain is Inactive rhomboid protein 1 (rho-5), found in Drosophila melanogaster (Fruit fly).